The sequence spans 242 residues: uncharacterized protein (242 aa).

8 to 15 (TGASGGIG) is an NADP(+) binding site. Substrate is bound at residue Ser137. Tyr150 serves as the catalytic Proton acceptor.

Belongs to the short-chain dehydrogenases/reductases (SDR) family.

This is an uncharacterized protein from Bacillus subtilis (strain 168).